A 130-amino-acid polypeptide reads, in one-letter code: Keratin-associated protein 12-1 (130 aa).

14 repeat units span residues 10–14 (CQPSC), 15–29 (CVSS…VSSP), 34–38 (CFVSS), 40–44 (CQPSC), 45–49 (CVSSS), 60–64 (CIPVR), 85–89 (CQSSV), 90–94 (CVPVS), 95–99 (CRPVC), 104–108 (CQSSG), 109–113 (CCQPS), 114–118 (CPTLV), 119–123 (CKPVT), and 124–128 (CSNPS). The 14 X 5 AA approximate repeats stretch occupies residues 10-128 (CQPSCCVSSS…CKPVTCSNPS (119 aa)).

The protein belongs to the KRTAP type 12 family. Interacts with hair keratins. In terms of tissue distribution, expressed only in the head and back skin of a 3 day old mouse. Not expressed in adult skin.

In terms of biological role, in the hair cortex, hair keratin intermediate filaments are embedded in an interfilamentous matrix, consisting of hair keratin-associated proteins (KRTAP), which are essential for the formation of a rigid and resistant hair shaft through their extensive disulfide bond cross-linking with abundant cysteine residues of hair keratins. The matrix proteins include the high-sulfur and high-glycine-tyrosine keratins. This Mus musculus (Mouse) protein is Keratin-associated protein 12-1.